A 38-amino-acid polypeptide reads, in one-letter code: Alpha-conotoxin LvIC (38 aa).

The propeptide occupies Ser1–Thr21. Intrachain disulfides connect Cys23-Cys29 and Cys24-Cys34. Gln35 carries the post-translational modification Glutamine amide.

It belongs to the conotoxin A superfamily. The two analogs ([DelQ14]LvIC and [D1G,DelQ14]LvIC) are amidated at their N-terminal Cys. In terms of tissue distribution, expressed by the venom gland.

The protein resides in the secreted. Functionally, alpha-conotoxins bind to the nicotinic acetylcholine receptors (nAChR) and inhibit them. This synthetic peptide inhibits rat alpha-6/alpha-3-beta-4 nAChR (IC(50)=3.3 uM). The polypeptide is Alpha-conotoxin LvIC (Conus lividus (Livid cone)).